A 208-amino-acid polypeptide reads, in one-letter code: N-(5'-phosphoribosyl)anthranilate isomerase (208 aa).

The protein belongs to the TrpF family.

The enzyme catalyses N-(5-phospho-beta-D-ribosyl)anthranilate = 1-(2-carboxyphenylamino)-1-deoxy-D-ribulose 5-phosphate. Its pathway is amino-acid biosynthesis; L-tryptophan biosynthesis; L-tryptophan from chorismate: step 3/5. The sequence is that of N-(5'-phosphoribosyl)anthranilate isomerase from Chlamydia trachomatis serovar L2 (strain ATCC VR-902B / DSM 19102 / 434/Bu).